The chain runs to 314 residues: Ribosomal RNA small subunit methyltransferase H (314 aa).

Residues 36–38 (GGH), D56, F80, D102, and Q109 contribute to the S-adenosyl-L-methionine site. Positions 278 to 300 (GGRSLKSIGKMKPSEEEVADNPR) are disordered. Positions 289 to 300 (KPSEEEVADNPR) are enriched in basic and acidic residues.

Belongs to the methyltransferase superfamily. RsmH family.

The protein localises to the cytoplasm. The enzyme catalyses cytidine(1402) in 16S rRNA + S-adenosyl-L-methionine = N(4)-methylcytidine(1402) in 16S rRNA + S-adenosyl-L-homocysteine + H(+). Functionally, specifically methylates the N4 position of cytidine in position 1402 (C1402) of 16S rRNA. The chain is Ribosomal RNA small subunit methyltransferase H from Photorhabdus laumondii subsp. laumondii (strain DSM 15139 / CIP 105565 / TT01) (Photorhabdus luminescens subsp. laumondii).